A 58-amino-acid chain; its full sequence is Large ribosomal subunit protein uL30 (58 aa).

This sequence belongs to the universal ribosomal protein uL30 family. Part of the 50S ribosomal subunit.

This chain is Large ribosomal subunit protein uL30, found in Vibrio vulnificus (strain CMCP6).